Reading from the N-terminus, the 461-residue chain is Putative forkhead-related transcription factor fkh-5 (461 aa).

Positions 171-262 form a DNA-binding region, fork-head; the sequence is QRPQLSYQLL…VEKEMIDVKT (92 aa).

It localises to the nucleus. Transcription factor. Binds to DNA sequence motif 5'-CTGTTTCA-3'. Regulates expression of a class of small RNAs, known as 21U-RNAs, perhaps acting redundantly with fkh-4 and fkh-3. This Caenorhabditis elegans protein is Putative forkhead-related transcription factor fkh-5 (fkh-5).